The chain runs to 336 residues: Tryptophan--tRNA ligase (336 aa).

ATP is bound by residues 15 to 17 (QPT) and 24 to 25 (GN). Positions 16–25 (PTSDSLHLGN) match the 'HIGH' region motif. Aspartate 141 provides a ligand contact to L-tryptophan. ATP is bound by residues 153–155 (GED), isoleucine 192, and 201–205 (KMSKS). The short motif at 201-205 (KMSKS) is the 'KMSKS' region element.

Belongs to the class-I aminoacyl-tRNA synthetase family. In terms of assembly, homodimer.

Its subcellular location is the cytoplasm. The enzyme catalyses tRNA(Trp) + L-tryptophan + ATP = L-tryptophyl-tRNA(Trp) + AMP + diphosphate + H(+). Catalyzes the attachment of tryptophan to tRNA(Trp). The polypeptide is Tryptophan--tRNA ligase (Mycobacterium tuberculosis (strain CDC 1551 / Oshkosh)).